A 1124-amino-acid polypeptide reads, in one-letter code: MAPPSEETPLIPQRSCSLLSTEAGALHVLLPARGPGPPQRLSFSFGDHLAEDLCVQAAKASGILPVYHSLFALATEDLSCWFPPSHIFSVEDASTQVLLYRIRFYFPNWFGLEKCHRFGLRKDLASAILDLPVLEHLFAQHRSDLVSGRLPVGLSLKEQGECLSLAVLDLARMAREQAQRPGELLKTVSYKACLPPSLRDLIQGLSFVTRRRIRRTVRRALRRVAACQADRHSLMAKYIMDLERLDPAGAAETFHVGLPGALGGHDGLGLLRVAGDGGIAWTQGEQEVLQPFCDFPEIVDISIKQAPRVGPAGEHRLVTVTRTDNQILEAEFPGLPEALSFVALVDGYFRLTTDSQHFFCKEVAPPRLLEEVAEQCHGPITLDFAINKLKTGGSRPGSYVLRRSPQDFDSFLLTVCVQNPLGPDYKGCLIRRSPTGTFLLVGLSRPHSSLRELLATCWDGGLHVDGVAVTLTSCCIPRPKEKSNLIVVQRGHSPPTSSLVQPQSQYQLSQMTFHKIPADSLEWHENLGHGSFTKIYRGCRHEVVDGEARKTEVLLKVMDAKHKNCMESFLEAASLMSQVSYRHLVLLHGVCMAGDSTMVQEFVHLGAIDMYLRKRGHLVPASWKLQVVKQLAYALNYLEDKGLPHGNVSARKVLLAREGADGSPPFIKLSDPGVSPAVLSLEMLTDRIPWVAPECLREAQTLSLEADKWGFGATVWEVFSGVTMPISALDPAKKLQFYEDRQQLPAPKWTELALLIQQCMAYEPVQRPSFRAVIRDLNSLISSDYELLSDPTPGALAPRDGLWNGAQLYACQDPTIFEERHLKYISQLGKGNFGSVELCRYDPLGDNTGALVAVKQLQHSGPDQQRDFQREIQILKALHSDFIVKYRGVSYGPGRQSLRLVMEYLPSGCLRDFLQRHRARLDASRLLLYSSQICKGMEYLGSRRCVHRDLAARNILVESEAHVKIADFGLAKLLPLDKDYYVVREPGQSPIFWYAPESLSDNIFSRQSDVWSFGVVLYELFTYCDKSCSPSAEFLRMMGCERDVPALCRLLELLEEGQRLPAPPACPAEVHELMKLCWAPSPQDRPSFSALGPQLDMLWSGSRGCETHAFTAHPEGKHHSLSFS.

The interaction with cytokine/interferon/growth hormone receptors stretch occupies residues 1–223; that stretch reads MAPPSEETPL…RRTVRRALRR (223 aa). Ser17 is subject to Phosphoserine. Positions 24 to 356 constitute an FERM domain; sequence GALHVLLPAR…GYFRLTTDSQ (333 aa). Residues 375-475 enclose the SH2; atypical domain; sequence QCHGPITLDF…GVAVTLTSCC (101 aa). In terms of domain architecture, Protein kinase 1 spans 521–781; sequence LEWHENLGHG…AVIRDLNSLI (261 aa). At Tyr785 the chain carries Phosphotyrosine; by autocatalysis. Residues 822 to 1111 enclose the Protein kinase 2 domain; the sequence is LKYISQLGKG…SRGCETHAFT (290 aa). Residues 828 to 836 and Lys855 each bind ATP; that span reads LGKGNFGSV. Residues Tyr904 and Tyr939 each carry the phosphotyrosine modification. The active-site Proton acceptor is the Asp949. Phosphotyrosine; by autocatalysis is present on residues Tyr980 and Tyr981.

This sequence belongs to the protein kinase superfamily. Tyr protein kinase family. JAK subfamily. As to quaternary structure, interacts with STAM2 and MYO18A. Interacts with SHB. Interacts with CD69. In terms of processing, tyrosine phosphorylated in response to IL-2 and IL-4. Dephosphorylation of Tyr-980 and Tyr-981 by PTPN2 negatively regulates cytokine-mediated signaling. In terms of tissue distribution, in NK cells and an NK-like cell line but not in resting T-cells or in other tissues. The S-form is more commonly seen in hematopoietic lines, whereas the B-form is detected in cells both of hematopoietic and epithelial origins.

The protein resides in the endomembrane system. The protein localises to the cytoplasm. The enzyme catalyses L-tyrosyl-[protein] + ATP = O-phospho-L-tyrosyl-[protein] + ADP + H(+). Its function is as follows. Non-receptor tyrosine kinase involved in various processes such as cell growth, development, or differentiation. Mediates essential signaling events in both innate and adaptive immunity and plays a crucial role in hematopoiesis during T-cells development. In the cytoplasm, plays a pivotal role in signal transduction via its association with type I receptors sharing the common subunit gamma such as IL2R, IL4R, IL7R, IL9R, IL15R and IL21R. Following ligand binding to cell surface receptors, phosphorylates specific tyrosine residues on the cytoplasmic tails of the receptor, creating docking sites for STATs proteins. Subsequently, phosphorylates the STATs proteins once they are recruited to the receptor. Phosphorylated STATs then form homodimer or heterodimers and translocate to the nucleus to activate gene transcription. For example, upon IL2R activation by IL2, JAK1 and JAK3 molecules bind to IL2R beta (IL2RB) and gamma chain (IL2RG) subunits inducing the tyrosine phosphorylation of both receptor subunits on their cytoplasmic domain. Then, STAT5A and STAT5B are recruited, phosphorylated and activated by JAK1 and JAK3. Once activated, dimerized STAT5 translocates to the nucleus and promotes the transcription of specific target genes in a cytokine-specific fashion. The polypeptide is Tyrosine-protein kinase JAK3 (Homo sapiens (Human)).